A 550-amino-acid polypeptide reads, in one-letter code: Methionine--tRNA ligase (550 aa).

The 'HIGH' region signature appears at 13-23 (PYANGPLHFGH). Zn(2+)-binding residues include Cys145, Cys148, Cys158, and Cys161. The short motif at 331-335 (QFSKS) is the 'KMSKS' region element. Lys334 provides a ligand contact to ATP.

It belongs to the class-I aminoacyl-tRNA synthetase family. MetG type 1 subfamily. As to quaternary structure, monomer. It depends on Zn(2+) as a cofactor.

Its subcellular location is the cytoplasm. It carries out the reaction tRNA(Met) + L-methionine + ATP = L-methionyl-tRNA(Met) + AMP + diphosphate. Is required not only for elongation of protein synthesis but also for the initiation of all mRNA translation through initiator tRNA(fMet) aminoacylation. This is Methionine--tRNA ligase from Chlamydia trachomatis serovar A (strain ATCC VR-571B / DSM 19440 / HAR-13).